Here is a 504-residue protein sequence, read N- to C-terminus: Protein DETOXIFICATION 38 (504 aa).

Helical transmembrane passes span 56–76 (LLLR…GMGI), 90–110 (LAAA…MLGM), 139–159 (IVLA…YPIL), 170–190 (YMGS…AVYF), 208–228 (ISAA…YAMG), 234–254 (IAYV…FYVI), 273–295 (GLWS…LWYT), 316–336 (SICM…NAAV), 356–376 (TWTA…VVIA), 401–421 (FLAV…VAVG), 433–453 (IGCY…TFNF), and 457–477 (GIWT…LYVT).

Belongs to the multi antimicrobial extrusion (MATE) (TC 2.A.66.1) family.

It localises to the membrane. This chain is Protein DETOXIFICATION 38, found in Arabidopsis thaliana (Mouse-ear cress).